The following is a 641-amino-acid chain: WW domain-binding protein 11 (641 aa).

Positions 1–11 (MGRRSTSSTKS) are enriched in polar residues. Positions 1–37 (MGRRSTSSTKSGKFMNPTDQARKEARKRELKKNKKQR) are disordered. Residues 1–45 (MGRRSTSSTKSGKFMNPTDQARKEARKRELKKNKKQRMMVRAAVL) form a required for nuclear import region. An N6-acetyllysine modification is found at lysine 13. The segment covering 28–37 (RELKKNKKQR) has biased composition (basic residues). Residues 75 to 133 (EKVLKDKRKKLRETFERILRLYEKENPDIYKELRKLEVEYEQKRAQLSQYFDAVKNAQH) are a coiled coil. At serine 181 the chain carries Phosphoserine. A disordered region spans residues 188–213 (HGVPRLPPGRKPPGPPPGPPPPQVLQ). Arginine 192 carries the post-translational modification Omega-N-methylarginine. Residues 192 to 210 (RLPPGRKPPGPPPGPPPPQ) are compositionally biased toward pro residues. Positions 217-221 (RKVGF) are interaction with PP1. Tyrosine 236 bears the Phosphotyrosine mark. Residues 236–550 (YSPELAQRGH…IQRPKADDAS (315 aa)) are disordered. Phosphoserine is present on serine 237. The segment covering 253–263 (SEDDGYPEDMD) has biased composition (acidic residues). Over residues 276 to 304 (TDRSDAESDGDEFGHREDSERDNTEEKKS) the composition is skewed to basic and acidic residues. 2 positions are modified to phosphoserine: serine 279 and serine 283. Positions 306–310 (LSVRF) are interaction with PP1. Residues 351–365 (EFSEEEDADDSDDSE) show a composition bias toward acidic residues. Serine 353, serine 361, and serine 364 each carry phosphoserine. The span at 366–380 (AEKQSQKQHKDDGHS) shows a compositional bias: basic and acidic residues. The segment covering 381 to 404 (DSTAAASSQQQAPPQSAPASQIQA) has biased composition (low complexity). 3 stretches are compositionally biased toward pro residues: residues 405–447 (PPMP…PPGM), 456–504 (RLLP…PPRP), and 510–530 (PLVPPLGPAPPGLFPPAPLPN). Residues 455 to 466 (PRLLPPGPPPGR) carry the PGR motif. Lysine 557 participates in a covalent cross-link: Glycyl lysine isopeptide (Lys-Gly) (interchain with G-Cter in SUMO2). Position 565 is an N6-acetyllysine (lysine 565). Residue lysine 572 forms a Glycyl lysine isopeptide (Lys-Gly) (interchain with G-Cter in SUMO2) linkage. Positions 588–620 (ENKGATAVPQRRSEDDSAVPVAKAAPRSGPSVA) are disordered. Position 600 is a phosphoserine (serine 600). The tract at residues 633–641 (FMKEMEGLL) is required for nuclear export.

In terms of assembly, interacts via the PGR motif with PQBP1 in the nucleus. Interacts with the WW domains of WBP4. Interacts with PPP1CA, PPP1CB and PPP1CC. As to expression, ubiquitously expressed, with highest levels in testis.

Its subcellular location is the nucleus. It localises to the cytoplasm. In terms of biological role, activates pre-mRNA splicing. May inhibit PP1 phosphatase activity. In Mus musculus (Mouse), this protein is WW domain-binding protein 11 (Wbp11).